The chain runs to 534 residues: Apolipoprotein N-acyltransferase (534 aa).

7 helical membrane passes run 8 to 28, 31 to 51, 69 to 89, 105 to 125, 127 to 147, 178 to 198, and 208 to 228; these read VILVWGFKRSLLAIGAGAFAV, LPPFGFFAAMFLSFTLLVWLI, AFAVGWLFGFGYFVAGLWWLG, LAILGLPACLAIFYGLAVALA, IFWSDGMGRIAALAAGFGLME, VIGAMGVTALAVFVFSAPALF, and VALAVLLFAAHLGYGAYALYL. The CN hydrolase domain maps to 246-496; it reads VQPDIDQAAK…TGFIDATVDS (251 aa). The Proton acceptor role is filled by E291. Residue K355 is part of the active site. The active-site Nucleophile is the C408. The chain crosses the membrane as a helical span at residues 511-531; the sequence is FWLTEALLILIALISREGFIF.

Belongs to the CN hydrolase family. Apolipoprotein N-acyltransferase subfamily.

Its subcellular location is the cell inner membrane. It carries out the reaction N-terminal S-1,2-diacyl-sn-glyceryl-L-cysteinyl-[lipoprotein] + a glycerophospholipid = N-acyl-S-1,2-diacyl-sn-glyceryl-L-cysteinyl-[lipoprotein] + a 2-acyl-sn-glycero-3-phospholipid + H(+). Its pathway is protein modification; lipoprotein biosynthesis (N-acyl transfer). In terms of biological role, catalyzes the phospholipid dependent N-acylation of the N-terminal cysteine of apolipoprotein, the last step in lipoprotein maturation. In Rhizobium etli (strain CIAT 652), this protein is Apolipoprotein N-acyltransferase.